The following is a 70-amino-acid chain: Large ribosomal subunit protein uL29 (70 aa).

Belongs to the universal ribosomal protein uL29 family.

The polypeptide is Large ribosomal subunit protein uL29 (rpl29) (Methanocaldococcus jannaschii (strain ATCC 43067 / DSM 2661 / JAL-1 / JCM 10045 / NBRC 100440) (Methanococcus jannaschii)).